Consider the following 578-residue polypeptide: Isocitrate dehydrogenase kinase/phosphatase (578 aa).

ATP is bound by residues 315–321 (APGIRGM) and Lys-336. Asp-371 is a catalytic residue.

Belongs to the AceK family.

The protein resides in the cytoplasm. The catalysed reaction is L-seryl-[isocitrate dehydrogenase] + ATP = O-phospho-L-seryl-[isocitrate dehydrogenase] + ADP + H(+). In terms of biological role, bifunctional enzyme which can phosphorylate or dephosphorylate isocitrate dehydrogenase (IDH) on a specific serine residue. This is a regulatory mechanism which enables bacteria to bypass the Krebs cycle via the glyoxylate shunt in response to the source of carbon. When bacteria are grown on glucose, IDH is fully active and unphosphorylated, but when grown on acetate or ethanol, the activity of IDH declines drastically concomitant with its phosphorylation. The protein is Isocitrate dehydrogenase kinase/phosphatase of Shigella dysenteriae serotype 1 (strain Sd197).